We begin with the raw amino-acid sequence, 67 residues long: Large ribosomal subunit protein uL29 (67 aa).

Belongs to the universal ribosomal protein uL29 family.

The polypeptide is Large ribosomal subunit protein uL29 (Desulforudis audaxviator (strain MP104C)).